Here is a 202-residue protein sequence, read N- to C-terminus: Protein GrpE 1 (202 aa).

It belongs to the GrpE family. As to quaternary structure, homodimer.

It is found in the cytoplasm. In terms of biological role, participates actively in the response to hyperosmotic and heat shock by preventing the aggregation of stress-denatured proteins, in association with DnaK and GrpE. It is the nucleotide exchange factor for DnaK and may function as a thermosensor. Unfolded proteins bind initially to DnaJ; upon interaction with the DnaJ-bound protein, DnaK hydrolyzes its bound ATP, resulting in the formation of a stable complex. GrpE releases ADP from DnaK; ATP binding to DnaK triggers the release of the substrate protein, thus completing the reaction cycle. Several rounds of ATP-dependent interactions between DnaJ, DnaK and GrpE are required for fully efficient folding. The protein is Protein GrpE 1 of Buchnera aphidicola subsp. Schizaphis graminum (strain Sg).